A 118-amino-acid chain; its full sequence is MFNKKQARLRRARKTRAKIAELKAVRLCVNRTNCHIYAQIISPCGGKVLASASTLDTDVRKDLANGGNKAAATTIGKLIAERAKAAGIEQVAFDRSGLQYHGRIQALAEAAREGGLKF.

Belongs to the universal ribosomal protein uL18 family. As to quaternary structure, part of the 50S ribosomal subunit; part of the 5S rRNA/L5/L18/L25 subcomplex. Contacts the 5S and 23S rRNAs.

Its function is as follows. This is one of the proteins that bind and probably mediate the attachment of the 5S RNA into the large ribosomal subunit, where it forms part of the central protuberance. The chain is Large ribosomal subunit protein uL18 from Dechloromonas aromatica (strain RCB).